Here is a 314-residue protein sequence, read N- to C-terminus: Olfactory receptor 5B3 (314 aa).

Topologically, residues 1 to 23 are extracellular; that stretch reads MENKTEVTQFILLGLTNDSELQV. N-linked (GlcNAc...) asparagine glycans are attached at residues Asn-3 and Asn-17. A helical transmembrane segment spans residues 24–44; sequence PLFITFPFIYIITLVGNLGII. Residues 45 to 52 lie on the Cytoplasmic side of the membrane; that stretch reads VLIFWDSC. The helical transmembrane segment at 53-73 threads the bilayer; sequence LHNPMYFFLSNLSLVDFCYSS. Topologically, residues 74 to 97 are extracellular; the sequence is AVTPIVMAGFLIEDKVISYNACAA. Cys-95 and Cys-187 are disulfide-bonded. The chain crosses the membrane as a helical span at residues 98–118; it reads QMYIFVAFATVENYLLASMAY. Residues 119–131 are Cytoplasmic-facing; it reads DRYAAVCKPLHYT. Residues 132-152 traverse the membrane as a helical segment; sequence TTMTTTVCARLAIGSYLCGFL. A glycan (N-linked (GlcNAc...) asparagine) is linked at Asn-153. Residues 153–194 lie on the Extracellular side of the membrane; that stretch reads NASIHTGDTFSLSFCKSNEVHHFFCDIPAVMVLSCSDRHISE. Residues 195-215 form a helical membrane-spanning segment; it reads LVLIYVVSFNIFIALLVILIS. The Cytoplasmic portion of the chain corresponds to 216 to 235; that stretch reads YTFIFITILKMHSASVYQKP. A helical transmembrane segment spans residues 236–256; that stretch reads LSTCASHFIAVGIFYGTIIFM. The Extracellular segment spans residues 257 to 269; it reads YLQPSSSHSMDTD. The chain crosses the membrane as a helical span at residues 270-290; that stretch reads KMAPVFYTMVIPMLNPLVYSL. Residues 291–314 are Cytoplasmic-facing; that stretch reads RNKEVKSAFKKVVEKAKLSVGWSV.

Belongs to the G-protein coupled receptor 1 family.

The protein localises to the cell membrane. In terms of biological role, odorant receptor. This chain is Olfactory receptor 5B3 (OR5B3), found in Homo sapiens (Human).